A 349-amino-acid chain; its full sequence is Phosphoribosylformylglycinamidine cyclo-ligase (349 aa).

This sequence belongs to the AIR synthase family.

Its subcellular location is the cytoplasm. The catalysed reaction is 2-formamido-N(1)-(5-O-phospho-beta-D-ribosyl)acetamidine + ATP = 5-amino-1-(5-phospho-beta-D-ribosyl)imidazole + ADP + phosphate + H(+). The protein operates within purine metabolism; IMP biosynthesis via de novo pathway; 5-amino-1-(5-phospho-D-ribosyl)imidazole from N(2)-formyl-N(1)-(5-phospho-D-ribosyl)glycinamide: step 2/2. In Lactobacillus delbrueckii subsp. bulgaricus (strain ATCC BAA-365 / Lb-18), this protein is Phosphoribosylformylglycinamidine cyclo-ligase.